The primary structure comprises 1072 residues: MLGDGKEGTSTIPGFNQIQFEGFYRFIDQGLIEELSKFPKIEDIDHEIEFQLFVETYQLVEPLIKERDAVYESLTYSSELYVSAGLIWKTSRNMQEQRIFIGNIPLMNSLGTSIVNGIYRIVINQILQSPGIYYQSELDHNGISVYTGTIISDWGGRLELEIDKKARIWARVSRKQKISILVLSSAMGSNLREILENVCYPEIFLSFLTDKEKKKIGSKENAILEFYQQFSCVGGDPIFSESLCKELQKKFFHQRCELGRIGRRNINWRLNLNIPQNNIFLLPRDILAAADHLIGMKFGMGTLDDMNHLKNKRIRSVADLLQDQLGLALARLENVVKGTISGAIRHKLIPTPQNLVTSTPLTTTYESFFGLHPLSQVLDRTNPLTQIVHGRKLSYLGPGGLTGRTANFRIRDIHPSHYGRICPIDTSEGINVGLIGSLSIHARIGDWGSLESPFYELFEKSKKARIRMLFLSPSQDEYYMIAAGNSLALNRGIQEEQAVPARYRQEFLTIAWEEVHLRSIFPFQYFSIGASLIPFIEHNDANRALMSSNMQRQAVPLSRSEKCIVGTGLERQVALDSGVPAIAEHEGKILYTDTEKIIFSGNGDTLSIPLIMYQRSNKNTCMHQKPQVRRGKCIKKGQILADGAATVGGELALGKNILVAYMPWEGYNFEDAVLISECLVYGDIYTSFHIRKYEIQTHVTTQGPERITKEIPHLEGRLLRNLDKNGIVMLGSWVETGDILVGKLTPQVAKESSYAPEDRLLRAILGIQVSTSKETCLKLPIGGRGRVIDVRWVQKKGGSSYNPEIIRVYISQKREIKVGDKVAGRHGNKGIISKILPRQDMPYLQDGRPVDMVFNPLGVPSRMNVGQIFECSLGLAGSLLDRHYRIAPFDERYEQEASRKLVFSELYEASKQTANPWVFEPEYPGKSRIFDGRTGDPFEQPVIIGKPYILKLIHQVDDKIHGRSSGHYALVTQQPLRGRSKQGGQRVGEMEVWALEGFGVAHILQEMLTYKSDHIRARQEVLGTTIVGGTIPKPDDAPESFRLLVRELRSLALELNHFLVSEKNFQINRKEV.

Belongs to the RNA polymerase beta chain family. As to quaternary structure, in plastids the minimal PEP RNA polymerase catalytic core is composed of four subunits: alpha, beta, beta', and beta''. When a (nuclear-encoded) sigma factor is associated with the core the holoenzyme is formed, which can initiate transcription.

The protein resides in the plastid. Its subcellular location is the chloroplast. It carries out the reaction RNA(n) + a ribonucleoside 5'-triphosphate = RNA(n+1) + diphosphate. In terms of biological role, DNA-dependent RNA polymerase catalyzes the transcription of DNA into RNA using the four ribonucleoside triphosphates as substrates. The protein is DNA-directed RNA polymerase subunit beta of Lepidium virginicum (Virginia pepperweed).